The chain runs to 274 residues: Large ribosomal subunit protein uL2 (274 aa).

Residues 223-256 (VAMNPVDHPHGGGEGRTSGGRHPVTPWGIPTKGY) form a disordered region.

The protein belongs to the universal ribosomal protein uL2 family. As to quaternary structure, part of the 50S ribosomal subunit. Forms a bridge to the 30S subunit in the 70S ribosome.

Functionally, one of the primary rRNA binding proteins. Required for association of the 30S and 50S subunits to form the 70S ribosome, for tRNA binding and peptide bond formation. It has been suggested to have peptidyltransferase activity; this is somewhat controversial. Makes several contacts with the 16S rRNA in the 70S ribosome. This chain is Large ribosomal subunit protein uL2, found in Trichlorobacter lovleyi (strain ATCC BAA-1151 / DSM 17278 / SZ) (Geobacter lovleyi).